Reading from the N-terminus, the 325-residue chain is Delta(1)-pyrroline-2-carboxylate reductase (325 aa).

The protein belongs to the ornithine cyclodeaminase/mu-crystallin family.

It catalyses the reaction L-proline + NAD(+) = 1-pyrroline-2-carboxylate + NADH + H(+). The enzyme catalyses L-proline + NADP(+) = 1-pyrroline-2-carboxylate + NADPH + H(+). Its function is as follows. Catalyzes the reduction of Delta(1)-pyrroline-2-carboxylate (Pyr2C) to L-proline, using preferentially NADPH over NADH as the electron donor. Is likely involved in a degradation pathway that converts trans-3-hydroxy-L-proline (t3LHyp) to L-proline. This chain is Delta(1)-pyrroline-2-carboxylate reductase, found in Bacillus cereus (strain ATCC 10987 / NRS 248).